The sequence spans 532 residues: Collagen alpha-1(XXIII) chain (532 aa).

At 1–23 (MGAGERAAGGGGTQDPGAGCGAR) the chain is on the cytoplasmic side. A helical; Signal-anchor for type II membrane protein membrane pass occupies residues 24-45 (ALGALCLLLSVGSATACLLLGA). Residues 46–532 (QAAALHGRVA…GLPVPGCWHK (487 aa)) lie on the Extracellular side of the membrane. The segment at 102-532 (PSECICPPGP…GLPVPGCWHK (431 aa)) is disordered. Collagen-like domains lie at 108–163 (PPGP…FGPR), 173–232 (GPPG…PGKK), 242–297 (GLPG…EQGD), and 313–372 (GPPG…MGLS). Composition is skewed to low complexity over residues 129–145 (QSGR…DGKP) and 157–172 (PGDF…DGAA). Pro residues-rich tracts occupy residues 174–184 (PPGPPGPPGAR), 241–250 (PGLPGPPGPK), and 314–326 (PPGP…PPGI). 2 stretches are compositionally biased toward basic and acidic residues: residues 342–354 (DGEK…KGDP) and 380–393 (PKGE…DHLQ). Positions 403-414 (PGPPGPPGPPGP) are enriched in pro residues. 2 Collagen-like domains span residues 404 to 452 (GPPG…GPPG) and 455 to 514 (GLPG…PGLD). Basic and acidic residues-rich tracts occupy residues 427 to 441 (DGAK…ERGP) and 478 to 495 (RGEK…ERGV).

In terms of assembly, homotrimer. Post-translationally, undergoes proteolytic cleavage by furin protease to yield a 60 kDa soluble form that forms a homotrimer and exhibits a low affinity interaction with heparin.

It is found in the cell membrane. The sequence is that of Collagen alpha-1(XXIII) chain (Col23a1) from Rattus norvegicus (Rat).